A 278-amino-acid chain; its full sequence is Probable endonuclease 4 (278 aa).

Zn(2+) is bound by residues histidine 69, histidine 109, glutamate 145, aspartate 179, histidine 182, histidine 214, aspartate 227, histidine 229, and glutamate 259.

The protein belongs to the AP endonuclease 2 family. It depends on Zn(2+) as a cofactor.

It catalyses the reaction Endonucleolytic cleavage to 5'-phosphooligonucleotide end-products.. Its function is as follows. Endonuclease IV plays a role in DNA repair. It cleaves phosphodiester bonds at apurinic or apyrimidinic (AP) sites, generating a 3'-hydroxyl group and a 5'-terminal sugar phosphate. The sequence is that of Probable endonuclease 4 from Bacteroides fragilis (strain ATCC 25285 / DSM 2151 / CCUG 4856 / JCM 11019 / LMG 10263 / NCTC 9343 / Onslow / VPI 2553 / EN-2).